A 139-amino-acid chain; its full sequence is Probable cytochrome b5 (139 aa).

The 77-residue stretch at 2 to 78 (SAEFTYQDVA…LEPLLVGTLK (77 aa)) folds into the Cytochrome b5 heme-binding domain. Heme-binding residues include His-37 and His-61. A helical transmembrane segment spans residues 105–125 (GLGIGLYAVLVLGGLAGFAAY).

The protein belongs to the cytochrome b5 family.

The protein localises to the endoplasmic reticulum membrane. The protein resides in the microsome membrane. Its function is as follows. Membrane bound hemoprotein which function as an electron carrier for several membrane bound oxygenases. The sequence is that of Probable cytochrome b5 from Neurospora crassa (strain ATCC 24698 / 74-OR23-1A / CBS 708.71 / DSM 1257 / FGSC 987).